A 301-amino-acid polypeptide reads, in one-letter code: Recombination-associated protein RdgC (301 aa).

This sequence belongs to the RdgC family.

It is found in the cytoplasm. The protein resides in the nucleoid. May be involved in recombination. The polypeptide is Recombination-associated protein RdgC (Stenotrophomonas maltophilia (strain R551-3)).